The sequence spans 298 residues: MSFKKETPLANAVFWAARKGNLALLQLLLNSGRVDVDCKDAYGTTALMVASYSGHYECVRELIMQGADINLQRETGSTALFFASQQGHNEIVKLLFEFGASTEFQTKDGGTALCAACQFGHSRVVDTLLKNGANVHDQLNDGATALFLASQEGHVNLIRQLLSSGAKVNQPREDGTAPLWMAAQMGHSEVVKVLLLRGADRDADRKDGSTALFKAAHKGHCSVMEELLKFSPSLGILKNGSTALHAAVMGGSLKAVDLLLKANADPALPNTNNELPRDLTKSERILRVLRLPLMNGES.

ANK repeat units follow at residues 8–38 (PLANAVFWAARKGNLALLQLLLNSGRVDVDC), 42–71 (YGTTALMVASYSGHYECVRELIMQGADINL), 75–104 (TGSTALFFASQQGHNEIVKLLFEFGASTEF), 108–137 (DGGTALCAACQFGHSRVVDTLLKNGANVHD), 141–170 (DGATALFLASQEGHVNLIRQLLSSGAKVNQ), 174–203 (DGTAPLWMAAQMGHSEVVKVLLLRGADRDA), 207–236 (DGSTALFKAAHKGHCSVMEELLKFSPSLGI), and 239–268 (NGSTALHAAVMGGSLKAVDLLLKANADPAL).

The protein is Ankyrin repeat domain-containing protein 29 (ankrd29) of Danio rerio (Zebrafish).